Here is a 275-residue protein sequence, read N- to C-terminus: MFTYIKEIEEAWQIKDKLLQDSVKLSAFKKTLQDVIENLNKGTIRVCEKQNSSWQVNDWVKKAILLYFMTTESQLYNNNYNSWYDKVAPKFPFDAELNKFKEAGIRKVPGSFVRTGTYIAKNVVIMPSFINIGAYIDEGTMIDTWATIGSCAQIGKNCHISGGTGIGGVLEPLQAKPVIIEDNCFIGARSEIAEGVIVEEGAVVSMGVFIGASTKIVYRDSGEIIYGIVPACSVVVPGVLPNKEADKPGLYCAVIVKQVDKNTRAKVSINELLRS.

Substrate-binding residues include Arg106 and Asp143.

It belongs to the transferase hexapeptide repeat family. As to quaternary structure, homotrimer.

It is found in the cytoplasm. The catalysed reaction is (S)-2,3,4,5-tetrahydrodipicolinate + succinyl-CoA + H2O = (S)-2-succinylamino-6-oxoheptanedioate + CoA. The protein operates within amino-acid biosynthesis; L-lysine biosynthesis via DAP pathway; LL-2,6-diaminopimelate from (S)-tetrahydrodipicolinate (succinylase route): step 1/3. The polypeptide is 2,3,4,5-tetrahydropyridine-2,6-dicarboxylate N-succinyltransferase (Rickettsia bellii (strain RML369-C)).